Reading from the N-terminus, the 161-residue chain is Glutaredoxin-2, mitochondrial (161 aa).

Residues 1-19 (MLWRRAALAGTRLVWSRSG) constitute a mitochondrion transit peptide. Serine 20 bears the Phosphoserine mark. The Glutaredoxin domain occupies 54 to 154 (VNQIQETISD…PLVHQCYLKK (101 aa)). Cysteine 65 contributes to the [2Fe-2S] cluster binding site. Lysine 71 serves as a coordination point for glutathione. Residue cysteine 74 is modified to S-glutathionyl cysteine; alternate. An intrachain disulfide couples cysteine 74 to cysteine 77. 2 residues coordinate glutathione: glutamine 106 and valine 118. Cysteine 150 provides a ligand contact to [2Fe-2S] cluster.

The protein belongs to the glutaredoxin family. Monomer; active form. Homodimer; inactive form. The homodimer is probably linked by 1 2Fe-2S cluster.

It is found in the mitochondrion. With respect to regulation, the 2Fe-2S present in the homodimer leads to inactivation of the enzyme. The 2Fe-2S may serve as a redox sensor: the presence of one-electron oxidants or reductants leading to the loss of the 2Fe-2S cluster, subsequent monomerization and activation of the enzyme. Its function is as follows. Glutathione-dependent oxidoreductase that facilitates the maintenance of mitochondrial redox homeostasis upon induction of apoptosis by oxidative stress. Involved in response to hydrogen peroxide and regulation of apoptosis caused by oxidative stress. Acts as a very efficient catalyst of monothiol reactions because of its high affinity for protein glutathione-mixed disulfides. Can receive electrons not only from glutathione (GSH), but also from thioredoxin reductase supporting both monothiol and dithiol reactions. Efficiently catalyzes both glutathionylation and deglutathionylation of mitochondrial complex I, which in turn regulates the superoxide production by the complex. Overexpression decreases the susceptibility to apoptosis and prevents loss of cardiolipin and cytochrome c release. In Pongo abelii (Sumatran orangutan), this protein is Glutaredoxin-2, mitochondrial (GLRX2).